Consider the following 700-residue polypeptide: Elongation factor G (700 aa).

Residues 8–290 (SLYRNIGISA…AVIDYLPAPT (283 aa)) form the tr-type G domain. GTP is bound by residues 17 to 24 (AHIDAGKT), 88 to 92 (DTPGH), and 142 to 145 (NKMD).

The protein belongs to the TRAFAC class translation factor GTPase superfamily. Classic translation factor GTPase family. EF-G/EF-2 subfamily.

The protein resides in the cytoplasm. Its function is as follows. Catalyzes the GTP-dependent ribosomal translocation step during translation elongation. During this step, the ribosome changes from the pre-translocational (PRE) to the post-translocational (POST) state as the newly formed A-site-bound peptidyl-tRNA and P-site-bound deacylated tRNA move to the P and E sites, respectively. Catalyzes the coordinated movement of the two tRNA molecules, the mRNA and conformational changes in the ribosome. This chain is Elongation factor G, found in Histophilus somni (strain 129Pt) (Haemophilus somnus).